The sequence spans 729 residues: Catalase-peroxidase (729 aa).

Positions Met-1–Gly-33 are disordered. A compositionally biased stretch (basic and acidic residues) spans Pro-15–Val-25. The segment at residues Trp-108–Tyr-229 is a cross-link (tryptophyl-tyrosyl-methioninium (Trp-Tyr) (with M-255)). Residue His-109 is the Proton acceptor of the active site. Positions Tyr-229–Met-255 form a cross-link, tryptophyl-tyrosyl-methioninium (Tyr-Met) (with W-108). His-270 contacts heme b.

This sequence belongs to the peroxidase family. Peroxidase/catalase subfamily. In terms of assembly, homodimer or homotetramer. The cofactor is heme b. Formation of the three residue Trp-Tyr-Met cross-link is important for the catalase, but not the peroxidase activity of the enzyme.

It carries out the reaction H2O2 + AH2 = A + 2 H2O. It catalyses the reaction 2 H2O2 = O2 + 2 H2O. Its function is as follows. Bifunctional enzyme with both catalase and broad-spectrum peroxidase activity. The sequence is that of Catalase-peroxidase from Erwinia tasmaniensis (strain DSM 17950 / CFBP 7177 / CIP 109463 / NCPPB 4357 / Et1/99).